Reading from the N-terminus, the 238-residue chain is Ribonuclease 3 (238 aa).

Residues Phe10–Gly139 form the RNase III domain. Position 52 (Glu52) interacts with Mg(2+). Residue Asp56 is part of the active site. Residues Asp125 and Glu128 each contribute to the Mg(2+) site. Residue Glu128 is part of the active site. Positions Asp165–Gln234 constitute a DRBM domain.

This sequence belongs to the ribonuclease III family. As to quaternary structure, homodimer. Requires Mg(2+) as cofactor.

It is found in the cytoplasm. The enzyme catalyses Endonucleolytic cleavage to 5'-phosphomonoester.. In terms of biological role, digests double-stranded RNA. Involved in the processing of primary rRNA transcript to yield the immediate precursors to the large and small rRNAs (23S and 16S). Processes some mRNAs, and tRNAs when they are encoded in the rRNA operon. Processes pre-crRNA and tracrRNA of type II CRISPR loci if present in the organism. This is Ribonuclease 3 from Anoxybacillus flavithermus (strain DSM 21510 / WK1).